We begin with the raw amino-acid sequence, 329 residues long: Arylacetonitrilase (329 aa).

The region spanning 6–279 (VRVAVTQAEP…EGIVYANLDM (274 aa)) is the CN hydrolase domain. Catalysis depends on glutamate 46, which acts as the Proton acceptor. The active site involves lysine 126. Cysteine 161 serves as the catalytic Nucleophile.

It belongs to the carbon-nitrogen hydrolase superfamily. Nitrilase family.

It carries out the reaction a nitrile + 2 H2O = a carboxylate + NH4(+). The catalysed reaction is 4-chlorophenylacetonitrile + 2 H2O = 4-chlorophenylacetate + NH4(+). Nitrilase that hydrolyzes preferentially phenylacetonitrile and heteroaromatic nitriles, but has significantly lower activity for (R,S)-mandelonitrile. Also acts on dinitriles like phenylenediacetonitriles (PDAs) 1,2-PDA, 1,3-PDA, and 1,4-PDA, and cyanophenyl acetonitriles (CPAs) 2-CPA and 4-CPA. This is Arylacetonitrilase from Hypocrea virens (strain Gv29-8 / FGSC 10586) (Gliocladium virens).